The following is a 258-amino-acid chain: Acetylglutamate kinase (258 aa).

Substrate is bound by residues 41-42 (GG), arginine 63, and asparagine 156.

Belongs to the acetylglutamate kinase family. ArgB subfamily.

It is found in the cytoplasm. It catalyses the reaction N-acetyl-L-glutamate + ATP = N-acetyl-L-glutamyl 5-phosphate + ADP. Its pathway is amino-acid biosynthesis; L-arginine biosynthesis; N(2)-acetyl-L-ornithine from L-glutamate: step 2/4. Its function is as follows. Catalyzes the ATP-dependent phosphorylation of N-acetyl-L-glutamate. This is Acetylglutamate kinase from Geobacillus thermodenitrificans (strain NG80-2).